A 507-amino-acid polypeptide reads, in one-letter code: uncharacterized protein (507 aa).

3 disordered regions span residues 91 to 162 (NEKT…KKLL), 174 to 255 (EKLQ…QQQQ), and 309 to 422 (KRKL…NYST). A compositionally biased stretch (acidic residues) spans 116–143 (DSSESDSSESESDSSESESESESNETSE). A compositionally biased stretch (low complexity) spans 144 to 155 (NESSSSSEPESS). Residues 174–193 (EKLQQEQQKQKEAQKPKEKP) show a composition bias toward basic and acidic residues. Low complexity-rich tracts occupy residues 194-236 (QQQQ…QQIE), 243-255 (PQQQQQQQQQQQQ), and 313-350 (QSQLDNDGLANKNDNNSNNNNYNNSNNNDSNNNNTNKP). Residues 351-360 (LSKRQKKLLK) are compositionally biased toward basic residues. Over residues 378 to 409 (NNKNDNSTNDSNNNNDNNNNNKNDTNDSNNDD) the composition is skewed to low complexity.

This is an uncharacterized protein from Dictyostelium discoideum (Social amoeba).